The chain runs to 268 residues: Zinc import ATP-binding protein ZnuC (268 aa).

Residues 16–231 form the ABC transporter domain; that stretch reads IQLKNINVVF…PTFMRLWGNQ (216 aa). 48–55 provides a ligand contact to ATP; it reads GPNGGGKS.

The protein belongs to the ABC transporter superfamily. Zinc importer (TC 3.A.1.15.5) family. As to quaternary structure, the complex is composed of two ATP-binding proteins (ZnuC), two transmembrane proteins (ZnuB) and a solute-binding protein (ZnuA).

It localises to the cell inner membrane. The catalysed reaction is Zn(2+)(out) + ATP(in) + H2O(in) = Zn(2+)(in) + ADP(in) + phosphate(in) + H(+)(in). Its function is as follows. Part of the ABC transporter complex ZnuABC involved in zinc import. Responsible for energy coupling to the transport system. The sequence is that of Zinc import ATP-binding protein ZnuC from Haemophilus influenzae (strain ATCC 51907 / DSM 11121 / KW20 / Rd).